Here is a 184-residue protein sequence, read N- to C-terminus: Ferredoxin-thioredoxin reductase subunit A2, chloroplastic (184 aa).

The N-terminal 71 residues, 1–71 (MTNSYALSPA…SRKNPKSTIR (71 aa)), are a transit peptide targeting the chloroplast.

It belongs to the ferredoxin thioredoxin reductase alpha subunit family. As to quaternary structure, heterodimer of subunit A (variable subunit) and subunit B (catalytic subunit). Heterodimeric FTR forms a complex with ferredoxin and thioredoxin.

The protein localises to the plastid. The protein resides in the chloroplast. In terms of biological role, variable subunit of the ferredoxin-thioredoxin reductase (FTR), which catalyzes the two-electron reduction of thioredoxins by the electrons provided by reduced ferredoxin. The polypeptide is Ferredoxin-thioredoxin reductase subunit A2, chloroplastic (Arabidopsis thaliana (Mouse-ear cress)).